A 1370-amino-acid chain; its full sequence is DNA-directed RNA polymerase subunit beta (1370 aa).

It belongs to the RNA polymerase beta chain family. In terms of assembly, the RNAP catalytic core consists of 2 alpha, 1 beta, 1 beta' and 1 omega subunit. When a sigma factor is associated with the core the holoenzyme is formed, which can initiate transcription.

It catalyses the reaction RNA(n) + a ribonucleoside 5'-triphosphate = RNA(n+1) + diphosphate. Functionally, DNA-dependent RNA polymerase catalyzes the transcription of DNA into RNA using the four ribonucleoside triphosphates as substrates. The protein is DNA-directed RNA polymerase subunit beta of Bordetella petrii (strain ATCC BAA-461 / DSM 12804 / CCUG 43448).